The sequence spans 717 residues: Probable metal-nicotianamine transporter YSL12 (717 aa).

The disordered stretch occupies residues 1-56; that stretch reads MASHANASGGGGDEEMVEASTLRHRHGAGKDANGVGTERQLAAAAAEGEEEGPSSV. A run of 14 helical transmembrane segments spans residues 76-96, 99-119, 144-164, 186-206, 248-268, 306-326, 351-371, 422-442, 450-470, 482-502, 536-556, 593-613, 636-656, and 671-691; these read AFVVSFFLSIMFSIIVMKLNL, GIIPSLNVSAGLLGFFFVRLW, CVVAAYGIAFSGGFGTYLFGM, IGWMIGFLFLVSFIGLLALVP, LGKFFLFSFVWGFFQWFYTAG, IVNVSVLLGGILSWGIMWPLI, VFISIALILGDGLYNFVKVLI, VAFGGYVAVAAVSIGTLPQIF, ILVAYVFAPVLAFCNAYGAGL, LAIFIFGAWAGASNGGVLVGL, FVSQVIGTAMGCVIAPCVFWL, LPKHCLTLCYIFFAAAIAINL, FYIGSYFAIDMFIGTVILFVW, and VASGLICGDGIWTLPQSILAL.

It belongs to the YSL (TC 2.A.67.2) family. In terms of tissue distribution, expressed in root cortex and stele.

It localises to the membrane. May be involved in the transport of nicotianamine-chelated metals. This is Probable metal-nicotianamine transporter YSL12 (YSL12) from Oryza sativa subsp. japonica (Rice).